The chain runs to 751 residues: Collagen alpha-1(XIII) chain (751 aa).

Residues 1–24 (MVAERTRKAAASGSRGPGELGAPG) are disordered. Over 1–40 (MVAERTRKAAASGSRGPGELGAPGPGTVALAEQCARLPSP) the chain is Cytoplasmic. The interval 1 to 119 (MVAERTRKAA…KMSPGCNCPP (119 aa)) is nonhelical region 1 (NC1). The span at 15–24 (RGPGELGAPG) shows a compositional bias: gly residues. A helical; Signal-anchor for type II membrane protein transmembrane segment spans residues 41 to 59 (GCCGLLALALCSLALSLLA). Over 60–751 (HFRTAELQAR…GLPVQGCWNK (692 aa)) the chain is Extracellular. Disordered stretches follow at residues 108–127 (APKMSPGCNCPPGPPGPTGR), 190–225 (PGHPGPKGEMGLVGPRGQPGPQGQKGEKGQCGEYPH), and 265–449 (TFQG…EMVD). Residues 116–125 (NCPPGPPGPT) show a composition bias toward pro residues. A triple-helical region 1 (COL1) region spans residues 120 to 223 (GPPGPTGRPG…KGEKGQCGEY (104 aa)). The span at 204–213 (PRGQPGPQGQ) shows a compositional bias: low complexity. Residues 214–225 (KGEKGQCGEYPH) show a composition bias toward basic and acidic residues. The segment at 224–273 (PHREYPGGMLAALRSNPIMSLKLLPLLNSVRLAPPPVIKRRTFQGEQSQT) is nonhelical region 2 (NC2). Residues 274 to 445 (GIQGPPGPPG…KGAKGEPGKG (172 aa)) are triple-helical region 2 (COL2). Pro residues-rich tracts occupy residues 278-288 (PPGPPGPPGPS), 296-312 (LPGPIGPPGLPGPPGPK), and 391-402 (PGPPGLPGPPGP). Low complexity predominate over residues 403–436 (KGEAGVDGQAGPPGQQGDKGQPGAAGEQGPSGPK). A compositionally biased stretch (basic and acidic residues) spans 438–447 (AKGEPGKGEM). The tract at residues 446-467 (EMVDYNGSINEALQEIRTLALM) is nonhelical region 3 (NC3). Residue N451 is glycosylated (N-linked (GlcNAc...) asparagine). The segment at 466–751 (LMGPPGLPGQ…GLPVQGCWNK (286 aa)) is disordered. Positions 468 to 733 (GPPGLPGQTG…KGDQGAPGLD (266 aa)) are triple-helical region 3 (COL3). Residues 470-484 (PGLPGQTGPPGPPGT) are compositionally biased toward pro residues. Basic and acidic residues-rich tracts occupy residues 499–509 (HDGDKGPRGKP), 557–568 (TGEKGEPGDEGR), and 586–596 (EKGEAGEKGDP). Residues 601-613 (PGPPGPEGPPGPP) are compositionally biased toward pro residues. The span at 615–628 (LQGFPGPKGEAGLE) shows a compositional bias: low complexity. Positions 630–643 (SKGEKGSQGEKGDR) are enriched in basic and acidic residues. The span at 658–673 (PGPPGTPGPIGVPGPA) shows a compositional bias: pro residues. A compositionally biased stretch (low complexity) spans 684–699 (DPGMTGPTGAAGLPGL). The span at 706-726 (KGNRGERGKKGSRGPKGDKGD) shows a compositional bias: basic and acidic residues. The segment at 734-751 (APCPLGEDGLPVQGCWNK) is nonhelical region 4 (NC4).

In terms of assembly, homotrimer; disulfide-linked. Nucleation of the type XIII collagen triple helix is likely to occur at the N-terminal region with triple helix formation proceeding from the N- to the C-terminus. Interacts with FN1, perlecan/HSPG2 and NID2.

The protein localises to the cell membrane. The protein resides in the postsynaptic cell membrane. In terms of biological role, involved in cell-matrix and cell-cell adhesion interactions that are required for normal development. May participate in the linkage between muscle fiber and basement membrane. May play a role in endochondral ossification of bone and branching morphogenesis of lung. Binds heparin. At neuromuscular junctions, may play a role in acetylcholine receptor clustering. The polypeptide is Collagen alpha-1(XIII) chain (Mus musculus (Mouse)).